Here is a 429-residue protein sequence, read N- to C-terminus: Glutamate-1-semialdehyde 2,1-aminomutase 2 (429 aa).

Lysine 268 bears the N6-(pyridoxal phosphate)lysine mark.

The protein belongs to the class-III pyridoxal-phosphate-dependent aminotransferase family. HemL subfamily. As to quaternary structure, homodimer. Pyridoxal 5'-phosphate serves as cofactor.

It localises to the cytoplasm. The catalysed reaction is (S)-4-amino-5-oxopentanoate = 5-aminolevulinate. The protein operates within porphyrin-containing compound metabolism; protoporphyrin-IX biosynthesis; 5-aminolevulinate from L-glutamyl-tRNA(Glu): step 2/2. The chain is Glutamate-1-semialdehyde 2,1-aminomutase 2 from Listeria monocytogenes serotype 4a (strain HCC23).